A 904-amino-acid polypeptide reads, in one-letter code: DNA polymerase I (904 aa).

Residues 186 to 279 enclose the 5'-3' exonuclease domain; sequence TPRQYPDFAA…DTLRLQPWDR (94 aa). Residues 317–493 form the 3'-5' exonuclease domain; it reads RGGALAPGTV…LADALDAELA (177 aa).

This sequence belongs to the DNA polymerase type-A family. In terms of assembly, single-chain monomer with multiple functions.

It carries out the reaction DNA(n) + a 2'-deoxyribonucleoside 5'-triphosphate = DNA(n+1) + diphosphate. In addition to polymerase activity, this DNA polymerase exhibits 3'-5' and 5'-3' exonuclease activity. The sequence is that of DNA polymerase I (polA) from Mycobacterium bovis (strain ATCC BAA-935 / AF2122/97).